Consider the following 652-residue polypeptide: Acetolactate synthase 3, chloroplastic (652 aa).

Positions 1 to 20 (MAAATSSSPISLTAKPSSKS) are enriched in polar residues. Residues 1–23 (MAAATSSSPISLTAKPSSKSPLP) are disordered. Residues 1–69 (MAAATSSSPI…PEKTDKIKTF (69 aa)) constitute a chloroplast transit peptide. Residue Glu126 participates in thiamine diphosphate binding. Residues Arg228, 334 to 355 (HGTV…FGVR), and 377 to 396 (DIDS…VCGD) contribute to the FAD site. The interval 469–549 (QHQMWAAQFY…VKILLLNNQH (81 aa)) is thiamine pyrophosphate binding. Positions 520 and 547 each coordinate Mg(2+).

It belongs to the TPP enzyme family. Mg(2+) serves as cofactor. It depends on thiamine diphosphate as a cofactor.

The protein localises to the plastid. Its subcellular location is the chloroplast. The catalysed reaction is 2 pyruvate + H(+) = (2S)-2-acetolactate + CO2. The protein operates within amino-acid biosynthesis; L-isoleucine biosynthesis; L-isoleucine from 2-oxobutanoate: step 1/4. It functions in the pathway amino-acid biosynthesis; L-valine biosynthesis; L-valine from pyruvate: step 1/4. This chain is Acetolactate synthase 3, chloroplastic, found in Brassica napus (Rape).